The chain runs to 424 residues: Arogenate dehydratase 4, chloroplastic (424 aa).

The transit peptide at 1–34 directs the protein to the chloroplast; sequence MQAATSCDLKFRSTDPTSRNKCFSHAIPKRVAVT. Positions 126-303 constitute a Prephenate dehydratase domain; that stretch reads RVAYQGVPGA…NVTRFLMLAR (178 aa). One can recognise an ACT domain in the interval 319-410; the sequence is VFAAQEHKGT…SFLRVLGSYP (92 aa).

In terms of tissue distribution, expressed in roots, leaves, stems, flowers and siliques. More abundant in stems and roots.

It is found in the plastid. The protein resides in the chloroplast stroma. The catalysed reaction is L-arogenate + H(+) = L-phenylalanine + CO2 + H2O. It participates in amino-acid biosynthesis; L-phenylalanine biosynthesis; L-phenylalanine from L-arogenate: step 1/1. In terms of biological role, converts the prephenate produced from the shikimate-chorismate pathway into phenylalanine. The polypeptide is Arogenate dehydratase 4, chloroplastic (Arabidopsis thaliana (Mouse-ear cress)).